Consider the following 390-residue polypeptide: GTP 3',8-cyclase, mitochondrial (390 aa).

The transit peptide at 1-45 (MRRCFSKITDCHLGFKNSNFLLVGSEVGSGSVTRTITTTTSERLF) directs the protein to the mitochondrion. The Radical SAM core domain maps to 69–290 (KFGRLHTYLR…PSIKRMQDHP (222 aa)). Arg-78 serves as a coordination point for GTP. [4Fe-4S] cluster-binding residues include Cys-85 and Cys-89. Tyr-91 contacts S-adenosyl-L-methionine. Residue Cys-92 coordinates [4Fe-4S] cluster. Arg-128 contacts GTP. Position 132 (Gly-132) interacts with S-adenosyl-L-methionine. Thr-159 provides a ligand contact to GTP. Ser-183 is an S-adenosyl-L-methionine binding site. Lys-220 provides a ligand contact to GTP. Met-254 contributes to the S-adenosyl-L-methionine binding site. 2 residues coordinate [4Fe-4S] cluster: Cys-317 and Cys-320. 322 to 324 (RLR) provides a ligand contact to GTP. Cys-334 lines the [4Fe-4S] cluster pocket.

This sequence belongs to the radical SAM superfamily. MoaA family. In terms of assembly, homodimer. The cofactor is [4Fe-4S] cluster. Expressed in all organs, with an abundant expression in the roots.

The protein resides in the mitochondrion matrix. The catalysed reaction is GTP + AH2 + S-adenosyl-L-methionine = (8S)-3',8-cyclo-7,8-dihydroguanosine 5'-triphosphate + 5'-deoxyadenosine + L-methionine + A + H(+). It functions in the pathway cofactor biosynthesis; molybdopterin biosynthesis. Catalyzes the cyclization of GTP to (8S)-3',8-cyclo-7,8-dihydroguanosine 5'-triphosphate. This is GTP 3',8-cyclase, mitochondrial (CNX2) from Arabidopsis thaliana (Mouse-ear cress).